A 281-amino-acid chain; its full sequence is BEN domain-containing protein 6 (281 aa).

Disordered stretches follow at residues V15–L62 and S143–K172. A coiled-coil region spans residues R19–Q99. The segment covering S143–S160 has biased composition (low complexity). Basic and acidic residues predominate over residues K162–K172. The BEN domain maps to E171 to K271.

As to quaternary structure, interacts (via BEN domain) with RBPJ.

The protein resides in the nucleus. Its function is as follows. Acts as a corepressor of recombining binding protein suppressor hairless (RBPJ) and inhibits Notch signaling in neural stem cells, thereby opposing their self-renewal and promoting neurogenesis. The sequence is that of BEN domain-containing protein 6 (Bend6) from Mus musculus (Mouse).